The sequence spans 471 residues: MAKIPLILSFCLLEAFLGAESTVFIENKEASTVLSRTRRGNSNRLEELIPGNLERECIEEKCSFEEAREVFENTEKTMEFWKIYIDGDQCNSNPCKNGAVCKDGVSSYECMCPPGYGGRNCEIDSTCATKNGGCEHFCRHDTPQKAVCSCASGYKLHEDGKSCKPAVPYPCGRITAPEMRGKVTRTENTIERWNITAHDEGDAHDEALDITEPPPPPTTSAAPAKIVPITKNDTRVVGGYDSVKGQLPWQVHLVDSRGLGFCGGSIINEKWVVTAAHCLEPGDNVTAVAGEYNTKEDDHTEQRRQVVKILPYPTYNRTRNKHHNDIALLELDQPLTFNSYVTPICIGSRDFTNNLLSNGPGTVSGWGSMLYRGRSAIVLQVLTVPFVDRVTCLKSTSTTILHSMFCAGYTAGGKDTCGGDSGGPYTNSIGETWFLTGVTSWGEECAKPGKYGIYTKVAKYVKWIRETTRLT.

The N-terminal stretch at 1–19 (MAKIPLILSFCLLEAFLGA) is a signal peptide. Positions 20 to 39 (ESTVFIENKEASTVLSRTRR) are excised as a propeptide. Residues 40–85 (GNSNRLEELIPGNLERECIEEKCSFEEAREVFENTEKTMEFWKIYI) form the Gla domain. Residues Asn-41, Glu-46, Glu-47, Glu-54, Glu-56, Glu-59, Glu-60, Glu-65, Glu-66, and Glu-69 each coordinate Ca(2+). Residues Glu-46, Glu-47, Glu-54, Glu-56, Glu-59, Glu-60, Glu-65, Glu-66, Glu-69, Glu-72, Glu-75, and Glu-79 each carry the 4-carboxyglutamate modification. Glu-54 contributes to the Mg(2+) binding site. Cysteines 57 and 62 form a disulfide. Glu-59 contacts Mg(2+). Residue Glu-65 coordinates Mg(2+). Glu-69 lines the Mg(2+) pocket. Glu-75, Glu-79, Asp-86, Gly-87, and Gln-89 together coordinate Ca(2+). Mg(2+) contacts are provided by Glu-75 and Glu-79. Residues 86-122 (DGDQCNSNPCKNGAVCKDGVSSYECMCPPGYGGRNCE) enclose the EGF-like 1; calcium-binding domain. Disulfide bonds link Cys-90/Cys-101, Cys-95/Cys-110, Cys-112/Cys-121, Cys-127/Cys-138, Cys-134/Cys-148, Cys-150/Cys-163, Cys-171/Cys-345, Cys-262/Cys-278, Cys-392/Cys-406, and Cys-417/Cys-445. The O-linked (Glc...) serine glycan is linked to Ser-92. Asp-103 provides a ligand contact to Ca(2+). Asp-103 carries the (3R)-3-hydroxyaspartate modification. Ser-107 carries the post-translational modification Phosphoserine. An EGF-like 2 domain is found at 123–164 (IDSTCATKNGGCEHFCRHDTPQKAVCSCASGYKLHEDGKSCK). A propeptide spans 186-235 (TENTIERWNITAHDEGDAHDEALDITEPPPPPTTSAAPAKIVPITKNDTR) (activation peptide). One can recognise a Peptidase S1 domain in the interval 236 to 469 (VVGGYDSVKG…YVKWIRETTR (234 aa)). His-277 acts as the Charge relay system in catalysis. Ca(2+) is bound by residues Glu-291, Asn-293, Glu-296, and Glu-301. The active-site Charge relay system is the Asp-325. The Charge relay system role is filled by Ser-421.

Belongs to the peptidase S1 family. In terms of assembly, heterodimer of a light chain and a heavy chain; disulfide-linked. Activated by factor XIa, which excises the activation peptide. The propeptide can also be removed by snake venom protease. Activated by coagulation factor VIIa-tissue factor (F7-F3) complex in calcium-dependent manner. Post-translationally, the iron and 2-oxoglutarate dependent 3-hydroxylation of aspartate and asparagine is (R) stereospecific within EGF domains.

The protein localises to the secreted. The catalysed reaction is Selective cleavage of Arg-|-Ile bond in factor X to form factor Xa.. Factor IX is a vitamin K-dependent plasma protein that participates in the intrinsic pathway of blood coagulation by converting factor X to its active form in the presence of Ca(2+) ions, phospholipids, and factor VIIIa. The chain is Coagulation factor IX (F9) from Gallus gallus (Chicken).